A 490-amino-acid polypeptide reads, in one-letter code: Hippocampus abundant transcript 1 protein (490 aa).

Methionine 1 is modified (N-acetylmethionine). The Extracellular segment spans residues 1-40; it reads MTQGKKKKRAANRSIMLAKKIIIKDGGTPQGIGSPSVYHA. N-linked (GlcNAc...) asparagine glycosylation occurs at asparagine 12. Residues 41-61 traverse the membrane as a helical segment; it reads VIVIFLEFFAWGLLTAPTLVV. Residues 62 to 74 lie on the Cytoplasmic side of the membrane; that stretch reads LHETFPKHTFLMN. Residues 75 to 95 traverse the membrane as a helical segment; it reads GLIQGVKGLLSFLSAPLIGAL. Over 96–103 the chain is Extracellular; the sequence is SDVWGRKS. A helical membrane pass occupies residues 104–124; it reads FLLLTVFFTCAPIPLMKISPW. Residues 125–126 lie on the Cytoplasmic side of the membrane; that stretch reads WY. Residues 127-147 form a helical membrane-spanning segment; the sequence is FAVISVSGVFAVTFSVVFAYV. Residues 148–160 are Extracellular-facing; sequence ADITQEHERSMAY. Residues 161–181 traverse the membrane as a helical segment; it reads GLVSATFAASLVTSPAIGAYL. The Cytoplasmic portion of the chain corresponds to 182-188; that stretch reads GRVYGDS. Residues 189 to 209 traverse the membrane as a helical segment; the sequence is LVVVLATAIALLDICFILVAV. Over 210–243 the chain is Extracellular; that stretch reads PESLPEKMRPASWGAPISWEQADPFASLKKVGQD. The chain crosses the membrane as a helical span at residues 244–264; the sequence is SIVLLICITVFLSYLPEAGQY. The Cytoplasmic portion of the chain corresponds to 265–284; it reads SSFFLYLRQIMKFSPESVAA. A helical transmembrane segment spans residues 285–305; sequence FIAVLGILSIIAQTIVLSLLM. Over 306–313 the chain is Extracellular; the sequence is RSIGNKNT. The helical transmembrane segment at 314–334 threads the bilayer; it reads ILLGLGFQILQLAWYGFGSEP. The Cytoplasmic segment spans residues 335–337; sequence WMM. The helical transmembrane segment at 338–358 threads the bilayer; it reads WAAGAVAAMSSITFPAVSALV. The Extracellular portion of the chain corresponds to 359-379; that stretch reads SRTADADQQGVVQGMITGIRG. The chain crosses the membrane as a helical span at residues 380–400; the sequence is LCNGLGPALYGFIFYIFHVEL. Residues 401–427 lie on the Cytoplasmic side of the membrane; that stretch reads KELPITGTDLGTNTSPQHHFEQNSIIP. A helical membrane pass occupies residues 428-448; sequence GPPFLFGACSVLLALLVALFI. Topologically, residues 449–490 are extracellular; the sequence is PEHTNLSLRSSSWRKHCGSHSHPHSTQAPGEAKEPLLQDTNV. An N-linked (GlcNAc...) asparagine glycan is attached at asparagine 453. The interval 466 to 490 is disordered; the sequence is GSHSHPHSTQAPGEAKEPLLQDTNV.

This sequence belongs to the major facilitator superfamily. In terms of tissue distribution, expressed in various tissues.

The protein resides in the membrane. This Mus musculus (Mouse) protein is Hippocampus abundant transcript 1 protein.